The chain runs to 217 residues: Pyridoxine/pyridoxamine 5'-phosphate oxidase (217 aa).

Residues 13-16 (RRDY) and lysine 71 each bind substrate. Residues 66 to 71 (RIVLLK), 81 to 82 (YT), lysine 88, and glutamine 110 each bind FMN. 3 residues coordinate substrate: tyrosine 128, arginine 132, and serine 136. FMN contacts are provided by residues 145 to 146 (QS) and tryptophan 190. 196–198 (RLH) lines the substrate pocket. Arginine 200 serves as a coordination point for FMN.

Belongs to the pyridoxamine 5'-phosphate oxidase family. In terms of assembly, homodimer. FMN is required as a cofactor.

The enzyme catalyses pyridoxamine 5'-phosphate + O2 + H2O = pyridoxal 5'-phosphate + H2O2 + NH4(+). It carries out the reaction pyridoxine 5'-phosphate + O2 = pyridoxal 5'-phosphate + H2O2. It functions in the pathway cofactor metabolism; pyridoxal 5'-phosphate salvage; pyridoxal 5'-phosphate from pyridoxamine 5'-phosphate: step 1/1. The protein operates within cofactor metabolism; pyridoxal 5'-phosphate salvage; pyridoxal 5'-phosphate from pyridoxine 5'-phosphate: step 1/1. In terms of biological role, catalyzes the oxidation of either pyridoxine 5'-phosphate (PNP) or pyridoxamine 5'-phosphate (PMP) into pyridoxal 5'-phosphate (PLP). The polypeptide is Pyridoxine/pyridoxamine 5'-phosphate oxidase (Edwardsiella ictaluri (strain 93-146)).